A 331-amino-acid chain; its full sequence is Anthranilate phosphoribosyltransferase (331 aa).

Residues G79, 82-83 (GD), T87, 89-92 (NIST), 107-115 (KHGNYGATS), and A119 each bind 5-phospho-alpha-D-ribose 1-diphosphate. G79 contacts anthranilate. S91 lines the Mg(2+) pocket. Position 110 (N110) interacts with anthranilate. R165 contacts anthranilate. 2 residues coordinate Mg(2+): D223 and E224.

The protein belongs to the anthranilate phosphoribosyltransferase family. In terms of assembly, homodimer. The cofactor is Mg(2+).

The catalysed reaction is N-(5-phospho-beta-D-ribosyl)anthranilate + diphosphate = 5-phospho-alpha-D-ribose 1-diphosphate + anthranilate. It functions in the pathway amino-acid biosynthesis; L-tryptophan biosynthesis; L-tryptophan from chorismate: step 2/5. Catalyzes the transfer of the phosphoribosyl group of 5-phosphorylribose-1-pyrophosphate (PRPP) to anthranilate to yield N-(5'-phosphoribosyl)-anthranilate (PRA). This is Anthranilate phosphoribosyltransferase from Bacteroides fragilis (strain YCH46).